The primary structure comprises 473 residues: FAD-dependent oxidoreductase dpasF (473 aa).

Positions 1–21 (MNRLLASALLVGSAVVAPVSA) are cleaved as a signal peptide. N-linked (GlcNAc...) asparagine glycans are attached at residues asparagine 26, asparagine 54, asparagine 92, asparagine 133, asparagine 185, asparagine 276, and asparagine 401.

It belongs to the beta-cyclopiazonate dehydrogenase family. Requires FAD as cofactor.

The protein operates within secondary metabolite biosynthesis; terpenoid biosynthesis. FAD-dependent oxidoreductase; part of the gene cluster that mediates the biosynthesis of the diterpenoid pyrones subglutinols A and B. The first step of the pathway is the synthesis of the alpha-pyrone moiety by the polyketide synthase dpasA via condensation of one acetyl-CoA starter unit with 3 malonyl-CoA units and 2 methylations. The alpha-pyrone is then combined with geranylgeranyl pyrophosphate (GGPP) formed by the GGPP synthase dpasD through the action of the prenyltransferase dpasC to yield a linear alpha-pyrone diterpenoid. Subsequent steps in the diterpenoid pyrone biosynthetic pathway involve the decalin core formation, which is initiated by the epoxidation of the C10-C11 olefin by the FAD-dependent oxidoreductase dpasE, and is followed by a cyclization cascade catalyzed by the terpene cyclase dpasB. The FAD-linked oxidoreductase dpasF is then involved in tetrahydrofuran (THF) ring formation at the C5 unit to complete the formation of subglutinols A and B. DpasF possesses also an additional catalytic ability of multi-step oxidations to generate a new DDP analog with an enone system at the C5 named FDDP A. The sequence is that of FAD-dependent oxidoreductase dpasF from Apiospora sacchari (Arthrinium sacchari).